A 30-amino-acid polypeptide reads, in one-letter code: Photosystem I reaction center subunit XII (30 aa).

Residues Ile7 to Lys26 form a helical membrane-spanning segment.

This sequence belongs to the PsaM family.

It localises to the plastid. It is found in the chloroplast thylakoid membrane. This chain is Photosystem I reaction center subunit XII, found in Porphyra purpurea (Red seaweed).